The primary structure comprises 342 residues: Ribosomal RNA small subunit methyltransferase C (342 aa).

Belongs to the methyltransferase superfamily. RsmC family. In terms of assembly, monomer.

The protein localises to the cytoplasm. The enzyme catalyses guanosine(1207) in 16S rRNA + S-adenosyl-L-methionine = N(2)-methylguanosine(1207) in 16S rRNA + S-adenosyl-L-homocysteine + H(+). Specifically methylates the guanine in position 1207 of 16S rRNA in the 30S particle. This Salmonella paratyphi B (strain ATCC BAA-1250 / SPB7) protein is Ribosomal RNA small subunit methyltransferase C.